The following is an 843-amino-acid chain: Taste receptor type 1 member 2 (843 aa).

Positions 1–19 (MGPQARTLHLLFLLLHALP) are cleaved as a signal peptide. The Extracellular portion of the chain corresponds to 20–570 (KPVMLVGNSD…AFLEWHEVPT (551 aa)). 9 N-linked (GlcNAc...) asparagine glycosylation sites follow: Asn-87, Asn-296, Asn-316, Asn-355, Asn-372, Asn-432, Asn-484, Asn-491, and Asn-531. Residues 571–591 (IVVTILAALGFISTLAILLIF) traverse the membrane as a helical segment. Residues 592-606 (WRHFQTPMVRSAGGP) lie on the Cytoplasmic side of the membrane. Residues 607–627 (MCFLMLVPLLLAFGMVPVYVG) form a helical membrane-spanning segment. Residues 628 to 642 (PPTVFSCFCRQAFFT) are Extracellular-facing. Residues 643–663 (VCFSVCLSCITVRSFQIVCVF) traverse the membrane as a helical segment. Residues 664 to 682 (KMARRLPSAYGFWMRYHGP) lie on the Cytoplasmic side of the membrane. A helical transmembrane segment spans residues 683 to 703 (YVFVAFITAVKVALVAGNMLA). Residues 704–731 (TTINPIGRTDPDDPNIIILSCHPNYRNG) are Extracellular-facing. A helical transmembrane segment spans residues 732-752 (LLFNTSMDLLLSVLGFSFAYV). At 753-764 (GKELPTNYNEAK) the chain is on the cytoplasmic side. A helical transmembrane segment spans residues 765 to 785 (FITLSMTFSFTSSISLCTFMS). The Extracellular portion of the chain corresponds to 786–789 (VHDG). The helical transmembrane segment at 790–810 (VLVTIMDLLVTVLNFLAIGLG) threads the bilayer. The Cytoplasmic portion of the chain corresponds to 811-843 (YFGPKCYMILFYPERNTSAYFNSMIQGYTMRKS).

It belongs to the G-protein coupled receptor 3 family. TAS1R subfamily. In terms of assembly, forms heterodimers with TAS1R3. As to expression, expressed mainly in circumvallate and foliate taste papillae.

The protein resides in the cell membrane. In terms of biological role, putative taste receptor. TAS1R2/TAS1R3 recognizes diverse natural and synthetic sweeteners. This is Taste receptor type 1 member 2 (Tas1r2) from Mus musculus (Mouse).